The following is a 585-amino-acid chain: MNVFKNFEKKIKKSLESSDIKGKNGEDLDLSKITVDPPRDSSHGHLSTNAAMVLAKSTGLNPRALAEKIIELLKNDPSVESINVAGPGFINIKLTKPFWQDLIKSMLEKGISYGRIPMGQGKRINVEYVSANPTGPMHVGHCRGAVVGDVLSNLLQFVGYNITKEYYINDAGKQIEVLAHSVLLRYREALGQKINEIPEGLYPGEYLIPLGQSLAQEFGDKLLTIDKEEALSIVKERAIHEMMSMIRKDLAALNIYHDIFFSERMLYADNARAIRNTINDLTLKGYIYKGKLPPPKGQNTEDWEPCEQTLFRSTDVGDDQDRVLIKSDGSYTYFAADVAYFRDKFNRHFDEMIYILGADHAGYVKRLEAMAKAISNDKAKLSVFLCQLVKLFRNGHPVRMSKRAGSFVTLRDVVEEVGSDPVRFMMLYRKCEAPLDFDFAKVTEQSKDNPIFYVQYASARCHSVFRQAQETLCIENISNDKIIEHLNRLTDDNEIFLIRKLSEYPRIIEQAVVHKEPHRLAFYLYDLASSFHTHWNKGSDNLNLRFIQPDDRNLSFARLGLIQAIMNILSSGLAIVGIKAATEMR.

The 'HIGH' region motif lies at 131–141 (ANPTGPMHVGH).

This sequence belongs to the class-I aminoacyl-tRNA synthetase family. In terms of assembly, monomer.

Its subcellular location is the cytoplasm. The enzyme catalyses tRNA(Arg) + L-arginine + ATP = L-arginyl-tRNA(Arg) + AMP + diphosphate. This chain is Arginine--tRNA ligase, found in Bartonella henselae (strain ATCC 49882 / DSM 28221 / CCUG 30454 / Houston 1) (Rochalimaea henselae).